The sequence spans 215 residues: HTH-type transcriptional repressor FabR (215 aa).

Residues 10–70 (KTRRSLVEAA…TMVDESGLML (61 aa)) form the HTH tetR-type domain. Residues 33–52 (SLREVAREAGIAPTSFYRHF) constitute a DNA-binding region (H-T-H motif).

As to quaternary structure, homodimer.

The protein localises to the cytoplasm. In terms of biological role, represses the transcription of fabB, involved in unsaturated fatty acid (UFA) biosynthesis. By controlling UFA production, FabR directly influences the physical properties of the membrane bilayer. The chain is HTH-type transcriptional repressor FabR from Shigella boydii serotype 18 (strain CDC 3083-94 / BS512).